Reading from the N-terminus, the 189-residue chain is Protein GrpE (189 aa).

Over residues 1–38 (MTKSNETERMEESEETHSSDIRSASESDHASGSDHTES) the composition is skewed to basic and acidic residues. Positions 1–54 (MTKSNETERMEESEETHSSDIRSASESDHASGSDHTESADEIPTADAEQGELEQ) are disordered.

It belongs to the GrpE family. In terms of assembly, homodimer.

It localises to the cytoplasm. In terms of biological role, participates actively in the response to hyperosmotic and heat shock by preventing the aggregation of stress-denatured proteins, in association with DnaK and GrpE. It is the nucleotide exchange factor for DnaK and may function as a thermosensor. Unfolded proteins bind initially to DnaJ; upon interaction with the DnaJ-bound protein, DnaK hydrolyzes its bound ATP, resulting in the formation of a stable complex. GrpE releases ADP from DnaK; ATP binding to DnaK triggers the release of the substrate protein, thus completing the reaction cycle. Several rounds of ATP-dependent interactions between DnaJ, DnaK and GrpE are required for fully efficient folding. This chain is Protein GrpE, found in Tropheryma whipplei (strain TW08/27) (Whipple's bacillus).